The primary structure comprises 461 residues: Argininosuccinate lyase (461 aa).

This sequence belongs to the lyase 1 family. Argininosuccinate lyase subfamily.

It is found in the cytoplasm. It catalyses the reaction 2-(N(omega)-L-arginino)succinate = fumarate + L-arginine. It participates in amino-acid biosynthesis; L-arginine biosynthesis; L-arginine from L-ornithine and carbamoyl phosphate: step 3/3. The polypeptide is Argininosuccinate lyase (Desulfitobacterium hafniense (strain DSM 10664 / DCB-2)).